The primary structure comprises 67 residues: Kappa-conotoxin-like 1 (67 aa).

An N-terminal signal peptide occupies residues M1–T26. 4 disulfide bridges follow: C29–C43, C36–C48, C42–C51, and C47–C55. Position 59 is an isoleucine amide (I59). A propeptide spanning residues A63 to E67 is cleaved from the precursor.

The protein belongs to the conotoxin I2 superfamily. As to expression, expressed by the venom duct.

The protein resides in the secreted. Its function is as follows. Inhibits the vertebrate voltage-gated potassium channels Kv1.1/KCNA1 and Kv1.3/KCNA3. This chain is Kappa-conotoxin-like 1, found in Conus vexillum (Flag cone).